Consider the following 658-residue polypeptide: UvrABC system protein B (658 aa).

The 390-residue stretch at 25–414 (KSLKNNNHYQ…LSKKNVAEQI (390 aa)) folds into the Helicase ATP-binding domain. 38–45 (GVTGSGKT) is an ATP binding site. The Beta-hairpin motif lies at 91–114 (HFDYYQPESYIPRRDLFIEKDSSI). Residues 433–607 (QVQDLFDEIK…ELKLRDDEIR (175 aa)) enclose the Helicase C-terminal domain. One can recognise a UVR domain in the interval 623–658 (EKIIKELDKKMRECTKNLDFEEAMRLRDEIAQLRTL).

Belongs to the UvrB family. Forms a heterotetramer with UvrA during the search for lesions. Interacts with UvrC in an incision complex.

It localises to the cytoplasm. Its function is as follows. The UvrABC repair system catalyzes the recognition and processing of DNA lesions. A damage recognition complex composed of 2 UvrA and 2 UvrB subunits scans DNA for abnormalities. Upon binding of the UvrA(2)B(2) complex to a putative damaged site, the DNA wraps around one UvrB monomer. DNA wrap is dependent on ATP binding by UvrB and probably causes local melting of the DNA helix, facilitating insertion of UvrB beta-hairpin between the DNA strands. Then UvrB probes one DNA strand for the presence of a lesion. If a lesion is found the UvrA subunits dissociate and the UvrB-DNA preincision complex is formed. This complex is subsequently bound by UvrC and the second UvrB is released. If no lesion is found, the DNA wraps around the other UvrB subunit that will check the other stand for damage. The sequence is that of UvrABC system protein B from Helicobacter pylori (strain ATCC 700392 / 26695) (Campylobacter pylori).